A 245-amino-acid chain; its full sequence is 1-(5-phosphoribosyl)-5-[(5-phosphoribosylamino)methylideneamino] imidazole-4-carboxamide isomerase (245 aa).

D7 functions as the Proton acceptor in the catalytic mechanism. Residue D129 is the Proton donor of the active site.

The protein belongs to the HisA/HisF family.

The protein resides in the cytoplasm. The catalysed reaction is 1-(5-phospho-beta-D-ribosyl)-5-[(5-phospho-beta-D-ribosylamino)methylideneamino]imidazole-4-carboxamide = 5-[(5-phospho-1-deoxy-D-ribulos-1-ylimino)methylamino]-1-(5-phospho-beta-D-ribosyl)imidazole-4-carboxamide. It participates in amino-acid biosynthesis; L-histidine biosynthesis; L-histidine from 5-phospho-alpha-D-ribose 1-diphosphate: step 4/9. The sequence is that of 1-(5-phosphoribosyl)-5-[(5-phosphoribosylamino)methylideneamino] imidazole-4-carboxamide isomerase from Vibrio campbellii (strain ATCC BAA-1116).